A 115-amino-acid polypeptide reads, in one-letter code: Ubiquitin-related modifier 1 (115 aa).

1-thioglycine is present on Gly115. Gly115 is covalently cross-linked (Glycyl lysine isopeptide (Gly-Lys) (interchain with K-? in acceptor proteins)).

The protein belongs to the URM1 family. C-terminal thiocarboxylation occurs in 2 steps, it is first acyl-adenylated (-COAMP) via the hesA/moeB/thiF part of UBA4, then thiocarboxylated (-COSH) via the rhodanese domain of UBA4.

It is found in the cytoplasm. It functions in the pathway tRNA modification; 5-methoxycarbonylmethyl-2-thiouridine-tRNA biosynthesis. Its function is as follows. Acts as a sulfur carrier required for 2-thiolation of mcm(5)S(2)U at tRNA wobble positions of cytosolic tRNA(Lys), tRNA(Glu) and tRNA(Gln). Serves as sulfur donor in tRNA 2-thiolation reaction by being thiocarboxylated (-COSH) at its C-terminus by the MOCS3 homolog UBA4. The sulfur is then transferred to tRNA to form 2-thiolation of mcm(5)S(2)U. Prior mcm(5) tRNA modification by the elongator complex is required for 2-thiolation. Also acts as a ubiquitin-like protein (UBL) that is covalently conjugated via an isopeptide bond to lysine residues of target proteins such as AHP1. The thiocarboxylated form serves as substrate for conjugation and oxidative stress specifically induces the formation of UBL-protein conjugates. The polypeptide is Ubiquitin-related modifier 1 (Coccidioides immitis (strain RS) (Valley fever fungus)).